A 99-amino-acid polypeptide reads, in one-letter code: PqqA binding protein (99 aa).

This sequence belongs to the PqqD family. Monomer. Interacts with PqqE.

The protein operates within cofactor biosynthesis; pyrroloquinoline quinone biosynthesis. Functionally, functions as a PqqA binding protein and presents PqqA to PqqE, in the pyrroloquinoline quinone (PQQ) biosynthetic pathway. The chain is PqqA binding protein from Acinetobacter baylyi (strain ATCC 33305 / BD413 / ADP1).